We begin with the raw amino-acid sequence, 89 residues long: MVNHKNVKKMIKAIAKRTLINKMRKSKTRTAIRKLVDIIKSGNKENVTPAFRSAESNLHKCVSKGVIHKNTAARKISRLNAKVKALMTA.

It belongs to the bacterial ribosomal protein bS20 family.

In terms of biological role, binds directly to 16S ribosomal RNA. This chain is Small ribosomal subunit protein bS20, found in Wolbachia sp. subsp. Brugia malayi (strain TRS).